The sequence spans 205 residues: Protein PAXX (205 aa).

The PISA domain maps to 39–81 (FNLYVTDAAELWSTCFSPDSLARLKARFGLSGAEDIHSRFRAA). Phosphothreonine is present on Thr147. The segment covering 147–159 (TITSPKKNTQPAG) has biased composition (polar residues). The disordered stretch occupies residues 147–205 (TITSPKKNTQPAGTQFLPELDHQRGSSGPGVRRRCPGESLINPGFKSKKPAAGVDFDET). Position 150 is a phosphoserine (Ser150). Positions 172–205 (SSGPGVRRRCPGESLINPGFKSKKPAAGVDFDET) are mediates interaction with XRCC5/Ku80 and XRCC6/Ku70 and association with the non-homologous end joining core complex. The XLM signature appears at 191-205 (FKSKKPAAGVDFDET).

The protein belongs to the XRCC4-XLF family. PAXX subfamily. As to quaternary structure, homodimer. Interacts with the DNA-bound XRCC5/Ku80 and XRCC6/Ku70 heterodimer (Ku complex); the interaction is direct. Associated component of the non-homologous end joining (NHEJ) complex, composed of the core proteins PRKDC, LIG4, XRCC4, XRCC6/Ku70, XRCC5/Ku86 and NHEJ1/XLF. Interacts with POLL (DNA polymerase lambda); promoting POLL recruitment to double-strand breaks (DSBs) and stimulation of the end-filling activity of POLL. Post-translationally, phosphorylation may inhibit interaction with the DNA-bound XRCC5/Ku80 and XRCC6/Ku70 heterodimer (Ku complex).

The protein localises to the nucleus. Its subcellular location is the chromosome. In terms of biological role, non-essential DNA repair protein involved in DNA non-homologous end joining (NHEJ); participates in double-strand break (DSB) repair and V(D)J recombination. May act as a scaffold required for accumulation of the Ku heterodimer, composed of XRCC5/Ku80 and XRCC6/Ku70, at double-strand break sites and promote the assembly and/or stability of the NHEJ machinery. Involved in NHEJ by promoting the ligation of blunt-ended DNA ends. Together with NHEJ1/XLF, collaborates with DNA polymerase lambda (POLL) to promote joining of non-cohesive DNA ends. Constitutes a non-essential component of classical NHEJ: has a complementary but distinct function with NHEJ1/XLF in DNA repair. This Mus musculus (Mouse) protein is Protein PAXX.